The chain runs to 614 residues: Zinc finger protein 276 (614 aa).

Residues M1–A50 are disordered. The 87-residue stretch at G77–G163 folds into the ZAD domain. Zn(2+) is bound by residues C79, C82, C136, and C139. The tract at residues A268–K420 is disordered. Over residues S357–E369 the composition is skewed to acidic residues. A compositionally biased stretch (basic and acidic residues) spans Y386–R408. Over residues I409–K420 the composition is skewed to basic residues. 5 consecutive C2H2-type zinc fingers follow at residues Y434–H458, R465–H490, Y496–H518, L524–H546, and F554–H577. The disordered stretch occupies residues Q583–T614. The segment covering A591–P600 has biased composition (pro residues).

It is found in the nucleus. The protein resides in the chromosome. Its subcellular location is the centromere. It localises to the kinetochore. Its function is as follows. May be involved in transcriptional regulation. This is Zinc finger protein 276 (ZNF276) from Homo sapiens (Human).